Consider the following 285-residue polypeptide: ATP synthase gamma chain (285 aa).

The protein belongs to the ATPase gamma chain family. F-type ATPases have 2 components, CF(1) - the catalytic core - and CF(0) - the membrane proton channel. CF(1) has five subunits: alpha(3), beta(3), gamma(1), delta(1), epsilon(1). CF(0) has three main subunits: a, b and c.

The protein localises to the cell membrane. Its function is as follows. Produces ATP from ADP in the presence of a proton gradient across the membrane. The gamma chain is believed to be important in regulating ATPase activity and the flow of protons through the CF(0) complex. The protein is ATP synthase gamma chain of Dehalococcoides mccartyi (strain ATCC BAA-2100 / JCM 16839 / KCTC 5957 / BAV1).